Here is a 456-residue protein sequence, read N- to C-terminus: ATP synthase subunit beta (456 aa).

ATP is bound at residue 135–142 (GGAGVGKT).

This sequence belongs to the ATPase alpha/beta chains family. In terms of assembly, F-type ATPases have 2 components, CF(1) - the catalytic core - and CF(0) - the membrane proton channel. CF(1) has five subunits: alpha(3), beta(3), gamma(1), delta(1), epsilon(1). CF(0) has four main subunits: a(1), b(1), b'(1) and c(9-12).

The protein resides in the cellular thylakoid membrane. The catalysed reaction is ATP + H2O + 4 H(+)(in) = ADP + phosphate + 5 H(+)(out). Its function is as follows. Produces ATP from ADP in the presence of a proton gradient across the membrane. The catalytic sites are hosted primarily by the beta subunits. This is ATP synthase subunit beta (atpD) from Acaryochloris marina (strain MBIC 11017).